The sequence spans 312 residues: Adenylyl-sulfate kinase, chloroplastic (312 aa).

An ATP-binding site is contributed by 142-149 (GLSGSGKS). Ser-216 serves as the catalytic Phosphoserine intermediate.

The protein belongs to the APS kinase family.

Its subcellular location is the plastid. It is found in the chloroplast. The catalysed reaction is adenosine 5'-phosphosulfate + ATP = 3'-phosphoadenylyl sulfate + ADP + H(+). It functions in the pathway sulfur metabolism; hydrogen sulfide biosynthesis; sulfite from sulfate: step 2/3. Its function is as follows. Catalyzes the synthesis of activated sulfate. The sequence is that of Adenylyl-sulfate kinase, chloroplastic (AKN) from Catharanthus roseus (Madagascar periwinkle).